Reading from the N-terminus, the 350-residue chain is Holliday junction branch migration complex subunit RuvB (350 aa).

The segment at 1–182 (MEDRIVTPLN…FGVLCPMDFY (182 aa)) is large ATPase domain (RuvB-L). ATP contacts are provided by residues L21, R22, G63, K66, T67, T68, 129–131 (EDY), R172, Y182, and R219. Residue T67 coordinates Mg(2+). Residues 183–253 (DQEELSEIVV…TSKAALELLE (71 aa)) are small ATPAse domain (RuvB-S). The head domain (RuvB-H) stretch occupies residues 256–350 (KEGFDSIDNK…KQSSLFDGEV (95 aa)). DNA-binding residues include R311 and R316.

Belongs to the RuvB family. In terms of assembly, homohexamer. Forms an RuvA(8)-RuvB(12)-Holliday junction (HJ) complex. HJ DNA is sandwiched between 2 RuvA tetramers; dsDNA enters through RuvA and exits via RuvB. An RuvB hexamer assembles on each DNA strand where it exits the tetramer. Each RuvB hexamer is contacted by two RuvA subunits (via domain III) on 2 adjacent RuvB subunits; this complex drives branch migration. In the full resolvosome a probable DNA-RuvA(4)-RuvB(12)-RuvC(2) complex forms which resolves the HJ.

It localises to the cytoplasm. The catalysed reaction is ATP + H2O = ADP + phosphate + H(+). In terms of biological role, the RuvA-RuvB-RuvC complex processes Holliday junction (HJ) DNA during genetic recombination and DNA repair, while the RuvA-RuvB complex plays an important role in the rescue of blocked DNA replication forks via replication fork reversal (RFR). RuvA specifically binds to HJ cruciform DNA, conferring on it an open structure. The RuvB hexamer acts as an ATP-dependent pump, pulling dsDNA into and through the RuvAB complex. RuvB forms 2 homohexamers on either side of HJ DNA bound by 1 or 2 RuvA tetramers; 4 subunits per hexamer contact DNA at a time. Coordinated motions by a converter formed by DNA-disengaged RuvB subunits stimulates ATP hydrolysis and nucleotide exchange. Immobilization of the converter enables RuvB to convert the ATP-contained energy into a lever motion, pulling 2 nucleotides of DNA out of the RuvA tetramer per ATP hydrolyzed, thus driving DNA branch migration. The RuvB motors rotate together with the DNA substrate, which together with the progressing nucleotide cycle form the mechanistic basis for DNA recombination by continuous HJ branch migration. Branch migration allows RuvC to scan DNA until it finds its consensus sequence, where it cleaves and resolves cruciform DNA. This is Holliday junction branch migration complex subunit RuvB from Clostridium kluyveri (strain NBRC 12016).